Here is a 157-residue protein sequence, read N- to C-terminus: Protein-export protein SecB (157 aa).

This sequence belongs to the SecB family. As to quaternary structure, homotetramer, a dimer of dimers. One homotetramer interacts with 1 SecA dimer.

The protein localises to the cytoplasm. In terms of biological role, one of the proteins required for the normal export of preproteins out of the cell cytoplasm. It is a molecular chaperone that binds to a subset of precursor proteins, maintaining them in a translocation-competent state. It also specifically binds to its receptor SecA. The polypeptide is Protein-export protein SecB (Dichelobacter nodosus (strain VCS1703A)).